Reading from the N-terminus, the 339-residue chain is Basic membrane protein A (339 aa).

The signal sequence occupies residues 1–17 (MNKILLLILLESIVFLS). Cysteine 18 is lipidated: N-palmitoyl cysteine. Cysteine 18 is lipidated: S-diacylglycerol cysteine.

It belongs to the BMP lipoprotein family. Monomer.

It is found in the cell inner membrane. Immunogenic protein. May be part of an ABC-type nucleoside uptake system involved in the purine salvage pathway. This chain is Basic membrane protein A (bmpA), found in Borreliella burgdorferi (strain ATCC 35210 / DSM 4680 / CIP 102532 / B31) (Borrelia burgdorferi).